The following is a 213-amino-acid chain: tRNA (guanine-N(7)-)-methyltransferase (213 aa).

The S-adenosyl-L-methionine site is built by Glu-44, Glu-69, Asp-96, and Asp-118. Asp-118 is an active-site residue. Substrate contacts are provided by residues Lys-122, Asp-154, and 191–194; that span reads TEYE.

Belongs to the class I-like SAM-binding methyltransferase superfamily. TrmB family.

The enzyme catalyses guanosine(46) in tRNA + S-adenosyl-L-methionine = N(7)-methylguanosine(46) in tRNA + S-adenosyl-L-homocysteine. It functions in the pathway tRNA modification; N(7)-methylguanine-tRNA biosynthesis. Functionally, catalyzes the formation of N(7)-methylguanine at position 46 (m7G46) in tRNA. In Exiguobacterium sibiricum (strain DSM 17290 / CCUG 55495 / CIP 109462 / JCM 13490 / 255-15), this protein is tRNA (guanine-N(7)-)-methyltransferase.